A 202-amino-acid chain; its full sequence is MSLIPMVIETTGRSERAYDIYSRLLKDRIVLLGSEVNDTVASLICAQLLFLESQDPEKEISLYINSPGGSVTAGLAIYDTLRFISAPVSTVCMGRAASMGAFLLAAGKPGLRYALPNSQIMIHQPSAGYQGQATDIEIHAKEVLRLKERLNRILAENTGRPYKDIVKATERDNFLTPEEAKDLGIIDRVLVSRQDMAQEKSE.

S98 functions as the Nucleophile in the catalytic mechanism. H123 is a catalytic residue.

The protein belongs to the peptidase S14 family. As to quaternary structure, fourteen ClpP subunits assemble into 2 heptameric rings which stack back to back to give a disk-like structure with a central cavity, resembling the structure of eukaryotic proteasomes.

The protein resides in the cytoplasm. The enzyme catalyses Hydrolysis of proteins to small peptides in the presence of ATP and magnesium. alpha-casein is the usual test substrate. In the absence of ATP, only oligopeptides shorter than five residues are hydrolyzed (such as succinyl-Leu-Tyr-|-NHMec, and Leu-Tyr-Leu-|-Tyr-Trp, in which cleavage of the -Tyr-|-Leu- and -Tyr-|-Trp bonds also occurs).. In terms of biological role, cleaves peptides in various proteins in a process that requires ATP hydrolysis. Has a chymotrypsin-like activity. Plays a major role in the degradation of misfolded proteins. The protein is ATP-dependent Clp protease proteolytic subunit of Desulfovibrio desulfuricans (strain ATCC 27774 / DSM 6949 / MB).